Reading from the N-terminus, the 410-residue chain is Caspase-1 (410 aa).

The region spanning Met1–Ser91 is the CARD domain. Positions Met1–Pro119 are excised as a propeptide. Positions Gly88–Ser104 are enriched in polar residues. The tract at residues Gly88–Glu125 is disordered. Active-site residues include His235 and Cys284. A propeptide spanning residues Ser297 to Asp322 is cleaved from the precursor.

This sequence belongs to the peptidase C14A family. As to quaternary structure, heterotetramer that consists of two anti-parallel arranged heterodimers, each one formed by a 20 kDa (Caspase-1 subunit p20) and a 10 kDa (Caspase-1 subunit p10) subunit. May be a component of the inflammasome, a protein complex which also includes PYCARD, CARD8 and NLRP2 and whose function would be the activation of pro-inflammatory caspases. Component of the AIM2 PANoptosome complex, a multiprotein complex that drives inflammatory cell death (PANoptosis). Both the p10 and p20 subunits interact with MEFV. Interacts with CARD17P/INCA and CARD18. Interacts with SERPINB1; this interaction regulates CASP1 activity. In terms of assembly, heterotetramer that consists of two anti-parallel arranged heterodimers, each one formed by a 20 kDa (Caspase-1 subunit p20) and a 10 kDa (Caspase-1 subunit p10) subunit. Post-translationally, the two subunits are derived from the precursor sequence by an autocatalytic mechanism. Ubiquitinated via 'Lys-11'-linked polyubiquitination. Deubiquitinated by USP8.

The protein resides in the cytoplasm. It is found in the cell membrane. The enzyme catalyses Strict requirement for an Asp residue at position P1 and has a preferred cleavage sequence of Tyr-Val-Ala-Asp-|-.. Functionally, thiol protease involved in a variety of inflammatory processes by proteolytically cleaving other proteins, such as the precursors of the inflammatory cytokines interleukin-1 beta (IL1B) and interleukin 18 (IL18) as well as the pyroptosis inducer Gasdermin-D (GSDMD), into active mature peptides. Plays a key role in cell immunity as an inflammatory response initiator: once activated through formation of an inflammasome complex, it initiates a pro-inflammatory response through the cleavage of the two inflammatory cytokines IL1B and IL18, releasing the mature cytokines which are involved in a variety of inflammatory processes. Cleaves a tetrapeptide after an Asp residue at position P1. Also initiates pyroptosis, a programmed lytic cell death pathway, through cleavage of GSDMD. In contrast to cleavage of interleukin IL1B, recognition and cleavage of GSDMD is not strictly dependent on the consensus cleavage site but depends on an exosite interface on CASP1 that recognizes and binds the Gasdermin-D, C-terminal (GSDMD-CT) part. Cleaves and activates CASP7 in response to bacterial infection, promoting plasma membrane repair. Upon inflammasome activation, during DNA virus infection but not RNA virus challenge, controls antiviral immunity through the cleavage of CGAS, rendering it inactive. In apoptotic cells, cleaves SPHK2 which is released from cells and remains enzymatically active extracellularly. This is Caspase-1 (CASP1) from Felis catus (Cat).